Consider the following 202-residue polypeptide: Phospholipase A2 inhibitor gamma subunit A (202 aa).

The first 19 residues, 1-19 (MKSLQIICLLFIFVARGSC), serve as a signal peptide directing secretion. Cystine bridges form between Cys-22-Cys-47, Cys-25-Cys-32, Cys-40-Cys-68, Cys-74-Cys-95, Cys-96-Cys-101, Cys-119-Cys-144, Cys-137-Cys-166, and Cys-170-Cys-192.

It belongs to the CNF-like-inhibitor family. Heteromer composed of subunit A and subunit B. As to expression, expressed by the liver.

The protein resides in the secreted. Inhibits the enzymatic activity of the phospholipase A2 (PLA2). In Elaphe climacophora (Japanese rat snake), this protein is Phospholipase A2 inhibitor gamma subunit A.